Reading from the N-terminus, the 760-residue chain is MSTVEEDSDTVTVETVNSVTLTQDTEGNLILHCPQNEADEIDSEDSIEPPHKRLCLSSEDDQSIDDSTPCISVVALPLSENDQSFEVTMTATTEVADDEVTEGTVTQIQILQNEQLDEISPLGNEEVSAVSQAWFTTKEDKDSLTNKGHKWKQGMWSKEEIDILMNNIERYLKARGIKDATEIIFEMSKDERKDFYRTIAWGLNRPLFAVYRRVLRMYDDRNHVGKYTPEEIEKLKELRIKHGNDWATIGAALGRSASSVKDRCRLMKDTCNTGKWTEEEEKRLAEVVHELTSTEPGDIVTQGVSWAAVAERVGTRSEKQCRSKWLNYLNWKQSGGTEWTKEDEINLILRIAELDVADENDINWDLLAEGWSSVRSPQWLRSKWWTIKRQIANHKDVSFPVLIKGLKQLHENQKNNPTLLENKSGSGVPNSNTNSSVQHVQIRVARLEDNTAISSSPMAALQIPVQITHVSSADSPATVDSETITLNSGTLQTFEILPSFHLQPTGTPGTYLLQTSSSQGLPLTLTASPTVTLTAAAPASPEQIIVHALSPEHLLNTSDNVTVQCHTPRVIIQTVATEDITSSISQAELTVDSDIQSSDFPEPPDALEADTFPDEIHHPKMTVEPSFNDAHVSKFSDQNSTELMNSVMVRTEEEISDTDLKQEESPSDLASAYVTEGLESPTIEEQVDQTIDDETILIVPSPHGFIQASDVIDTESVLPLTTLTDPILQHHQEESNIIGSSLGSPVSEDSKDVEDLVNCH.

The segment at 1 to 237 (MSTVEEDSDT…TPEEIEKLKE (237 aa)) is interaction with CCND2. The tract at residues 87–170 (VTMTATTEVA…IDILMNNIER (84 aa)) is required for transcriptional activation. Residues 87–458 (VTMTATTEVA…DNTAISSSPM (372 aa)) form a required for DNA-binding region. The segment at 176 to 760 (GIKDATEIIF…KDVEDLVNCH (585 aa)) is interaction with CCND1, CCND2 and CCND3. The Myb-like 1 domain maps to 225–263 (GKYTPEEIEKLKELRIKHGNDWATIGAALGRSASSVKDR). Residues 268-333 (KDTCNTGKWT…KWLNYLNWKQ (66 aa)) form the HTH myb-type domain. The H-T-H motif DNA-binding region spans 306-329 (WAAVAERVGTRSEKQCRSKWLNYL). One can recognise a Myb-like 2 domain in the interval 339 to 388 (WTKEDEINLILRIAELDVADENDINWDLLAEGWSSVRSPQWLRSKWWTIK). Disordered stretches follow at residues 414–435 (KNNPTLLENKSGSGVPNSNTNS) and 738–760 (IGSSLGSPVSEDSKDVEDLVNCH). A required for transcriptional activation region spans residues 459–760 (AALQIPVQIT…KDVEDLVNCH (302 aa)).

It belongs to the DMTF1 family. Interacts with the D-type cyclins CCND1, CCND2 and CCND3. Interaction with D-type cyclins may modulate transcriptional activation by this protein. Phosphorylated by the cyclin-D2/CDK4, cyclin-D3/CDK4 and cyclin-D2/CDK6 complexes and to a lesser extent by the cyclin-D1/CDK4 complex. As to expression, expressed at relatively low levels in colonic mucosa, ovary, peripheral leukocytes, prostate and small intestine, and at higher levels in spleen, testis and thymus. Expressed in multiple regions of the brain and CNS including amygdala, caudate, corpus callosum, hippocampus, substantia nigra and subthalamic nucleus. Isoform 1 is the predominant isoform in monocytes, macrophages and neutrophils, isoform 2 is most strongly expressed in peripheral blood leukocytes and quiescent CD34 positive cells, and isoform 3 is expressed at low levels in all hematopoietic cell types. Expression is frequently reduced in non-small-cell lung carcinomas (NSCLC) due to hemizygous gene deletion, strongly suggesting that this locus is haploinsufficient for tumor suppression. Loss of this locus frequently occurs in tumors which retain wild-type CDKN2A/ARF and p53/TP53 loci. Hemizygous gene deletion has also been observed in leukemic blasts from patients with abnormalities of the long arm of chromosome 7.

The protein resides in the nucleus. In terms of biological role, transcriptional activator which activates the CDKN2A/ARF locus in response to Ras-Raf signaling, thereby promoting p53/TP53-dependent growth arrest. Binds to the consensus sequence 5'-CCCG[GT]ATGT-3'. Isoform 1 may cooperate with MYB to activate transcription of the ANPEP gene. Isoform 2 may antagonize transcriptional activation by isoform 1. The chain is Cyclin-D-binding Myb-like transcription factor 1 (DMTF1) from Homo sapiens (Human).